Reading from the N-terminus, the 325-residue chain is Short chain isoprenyl diphosphate synthase (325 aa).

Residues Lys-44, Arg-47, and His-76 each contribute to the isopentenyl diphosphate site. Positions 83 and 87 each coordinate Mg(2+). Residue Arg-92 coordinates an all-trans-polyprenyl diphosphate. Arg-93 contributes to the isopentenyl diphosphate binding site. The an all-trans-polyprenyl diphosphate site is built by Lys-173, Thr-174, Gln-211, Lys-228, and Lys-238.

It belongs to the FPP/GGPP synthase family. In terms of assembly, homodimer. It depends on Mg(2+) as a cofactor.

Its subcellular location is the cytoplasm. The chain is Short chain isoprenyl diphosphate synthase (idsA) from Methanothermobacter thermautotrophicus (strain ATCC 29096 / DSM 1053 / JCM 10044 / NBRC 100330 / Delta H) (Methanobacterium thermoautotrophicum).